Consider the following 447-residue polypeptide: Bifunctional protein GlmU (447 aa).

The interval 1-225 (MLTVAILAAG…NGELQGINNR (225 aa)) is pyrophosphorylase. UDP-N-acetyl-alpha-D-glucosamine is bound by residues 7–10 (LAAG), Lys-21, Gln-73, and 78–79 (GT). Position 103 (Asp-103) interacts with Mg(2+). The UDP-N-acetyl-alpha-D-glucosamine site is built by Gly-140, Glu-154, Asn-169, and Asn-223. Asn-223 serves as a coordination point for Mg(2+). Residues 226–246 (VQLSKCEETIQNLIKEKHMLG) are linker. An N-acetyltransferase region spans residues 247–447 (GVTFINPASC…QVNIENWKKN (201 aa)). Arg-328 and Lys-346 together coordinate UDP-N-acetyl-alpha-D-glucosamine. His-358 functions as the Proton acceptor in the catalytic mechanism. Tyr-361 and Asn-372 together coordinate UDP-N-acetyl-alpha-D-glucosamine. 3 residues coordinate acetyl-CoA: Ala-375, Ala-418, and Arg-435.

The protein in the N-terminal section; belongs to the N-acetylglucosamine-1-phosphate uridyltransferase family. It in the C-terminal section; belongs to the transferase hexapeptide repeat family. In terms of assembly, homotrimer. Requires Mg(2+) as cofactor.

The protein localises to the cytoplasm. It catalyses the reaction alpha-D-glucosamine 1-phosphate + acetyl-CoA = N-acetyl-alpha-D-glucosamine 1-phosphate + CoA + H(+). The catalysed reaction is N-acetyl-alpha-D-glucosamine 1-phosphate + UTP + H(+) = UDP-N-acetyl-alpha-D-glucosamine + diphosphate. It participates in nucleotide-sugar biosynthesis; UDP-N-acetyl-alpha-D-glucosamine biosynthesis; N-acetyl-alpha-D-glucosamine 1-phosphate from alpha-D-glucosamine 6-phosphate (route II): step 2/2. Its pathway is nucleotide-sugar biosynthesis; UDP-N-acetyl-alpha-D-glucosamine biosynthesis; UDP-N-acetyl-alpha-D-glucosamine from N-acetyl-alpha-D-glucosamine 1-phosphate: step 1/1. The protein operates within bacterial outer membrane biogenesis; LPS lipid A biosynthesis. Its function is as follows. Catalyzes the last two sequential reactions in the de novo biosynthetic pathway for UDP-N-acetylglucosamine (UDP-GlcNAc). The C-terminal domain catalyzes the transfer of acetyl group from acetyl coenzyme A to glucosamine-1-phosphate (GlcN-1-P) to produce N-acetylglucosamine-1-phosphate (GlcNAc-1-P), which is converted into UDP-GlcNAc by the transfer of uridine 5-monophosphate (from uridine 5-triphosphate), a reaction catalyzed by the N-terminal domain. The protein is Bifunctional protein GlmU of Prochlorococcus marinus (strain MIT 9515).